We begin with the raw amino-acid sequence, 232 residues long: 26.5 kDa heat shock protein, mitochondrial (232 aa).

The transit peptide at 1–42 directs the protein to the mitochondrion; that stretch reads MALARLALRNLQQKLSPSLMGQSCERGLVGNRHNPMKLNRFM. Positions 44 to 82 are disordered; the sequence is TSAGEQEDKMNTEVSVSEKKSPRQNFPRRRGRKSLWRNT. Residues 49–64 show a composition bias toward basic and acidic residues; it reads QEDKMNTEVSVSEKKS. Basic residues predominate over residues 69–78; the sequence is FPRRRGRKSL. One can recognise a sHSP domain in the interval 114 to 232; the sequence is IFDNFNVNPF…KKNVQEISVE (119 aa).

Belongs to the small heat shock protein (HSP20) family. In terms of assembly, may form oligomeric structures.

It is found in the mitochondrion. This is 26.5 kDa heat shock protein, mitochondrial (HSP26.5) from Arabidopsis thaliana (Mouse-ear cress).